A 180-amino-acid chain; its full sequence is Pro-glucagon (180 aa).

An N-terminal signal peptide occupies residues 1–20 (MKSLYFVAGLFVMLVQGSWQ). Positions 25–35 (NTEEKSSSFPA) are enriched in polar residues. Residues 25–59 (NTEEKSSSFPAPQTDPLGDPDQINEDKRHSQGTFT) form a disordered region. Serine 54 carries the phosphoserine modification. The propeptide occupies 84–89 (NKNNIA). A phosphoserine mark is found at serine 105 and serine 108. Arginine amide is present on arginine 127. The propeptide occupies 131–145 (DFPEEVNIVEELRRR). Residues serine 150 and serine 152 each carry the phosphoserine modification.

It belongs to the glucagon family. In terms of processing, proglucagon is post-translationally processed in a tissue-specific manner in pancreatic A cells and intestinal L cells. In pancreatic A cells, the major bioactive hormone is glucagon cleaved by PCSK2/PC2. In the intestinal L cells PCSK1/PC1 liberates GLP-1, GLP-2, glicentin and oxyntomodulin. GLP-1 is further N-terminally truncated by post-translational processing in the intestinal L cells resulting in GLP-1(7-37) GLP-1-(7-36)amide. The C-terminal amidation is neither important for the metabolism of GLP-1 nor for its effects on the endocrine pancreas. Glucagon is secreted in the A cells of the islets of Langerhans. GLP-1, GLP-2, oxyntomodulin and glicentin are secreted from enteroendocrine cells throughout the gastrointestinal tract.

It is found in the secreted. In terms of biological role, plays a key role in glucose metabolism and homeostasis. Regulates blood glucose by increasing gluconeogenesis and decreasing glycolysis. A counterregulatory hormone of insulin, raises plasma glucose levels in response to insulin-induced hypoglycemia. Plays an important role in initiating and maintaining hyperglycemic conditions in diabetes. Functionally, potent stimulator of glucose-dependent insulin release. Also stimulates insulin release in response to IL6. Plays important roles on gastric motility and the suppression of plasma glucagon levels. May be involved in the suppression of satiety and stimulation of glucose disposal in peripheral tissues, independent of the actions of insulin. Has growth-promoting activities on intestinal epithelium. May also regulate the hypothalamic pituitary axis (HPA) via effects on LH, TSH, CRH, oxytocin, and vasopressin secretion. Increases islet mass through stimulation of islet neogenesis and pancreatic beta cell proliferation. Inhibits beta cell apoptosis. Stimulates intestinal growth and up-regulates villus height in the small intestine, concomitant with increased crypt cell proliferation and decreased enterocyte apoptosis. The gastrointestinal tract, from the stomach to the colon is the principal target for GLP-2 action. Plays a key role in nutrient homeostasis, enhancing nutrient assimilation through enhanced gastrointestinal function, as well as increasing nutrient disposal. Stimulates intestinal glucose transport and decreases mucosal permeability. Its function is as follows. Significantly reduces food intake. Inhibits gastric emptying in humans. Suppression of gastric emptying may lead to increased gastric distension, which may contribute to satiety by causing a sensation of fullness. In terms of biological role, may modulate gastric acid secretion and the gastro-pyloro-duodenal activity. May play an important role in intestinal mucosal growth in the early period of life. The polypeptide is Pro-glucagon (GCG) (Bos taurus (Bovine)).